We begin with the raw amino-acid sequence, 382 residues long: S-adenosylmethionine synthase (382 aa).

Position 15 (histidine 15) interacts with ATP. Mg(2+) is bound at residue aspartate 17. Glutamate 43 is a K(+) binding site. L-methionine is bound by residues glutamate 56 and glutamine 99. Residues 99-109 (QSGDIAQGVDR) are flexible loop. ATP is bound by residues 164–166 (DAK), 230–231 (KF), aspartate 239, 245–246 (RK), alanine 262, and lysine 266. Aspartate 239 provides a ligand contact to L-methionine. An L-methionine-binding site is contributed by lysine 270.

Belongs to the AdoMet synthase family. Homotetramer; dimer of dimers. The cofactor is Mg(2+). K(+) is required as a cofactor.

Its subcellular location is the cytoplasm. It carries out the reaction L-methionine + ATP + H2O = S-adenosyl-L-methionine + phosphate + diphosphate. It functions in the pathway amino-acid biosynthesis; S-adenosyl-L-methionine biosynthesis; S-adenosyl-L-methionine from L-methionine: step 1/1. Its function is as follows. Catalyzes the formation of S-adenosylmethionine (AdoMet) from methionine and ATP. The overall synthetic reaction is composed of two sequential steps, AdoMet formation and the subsequent tripolyphosphate hydrolysis which occurs prior to release of AdoMet from the enzyme. The protein is S-adenosylmethionine synthase of Dichelobacter nodosus (strain VCS1703A).